A 1170-amino-acid polypeptide reads, in one-letter code: RNA-binding protein 33 (1170 aa).

Disordered stretches follow at residues 1–152 (MAAA…EGHE) and 199–221 (KDIK…LRFK). A2 is subject to N-acetylalanine. The segment covering 20 to 36 (QFDKPGAERSWRRRAAD) has biased composition (basic and acidic residues). Over residues 37 to 49 (EDWDSELEDDLLG) the composition is skewed to acidic residues. S41 carries the phosphoserine modification. The span at 82 to 108 (FSSQGVTISLNATSGMVTSFELSDNTN) shows a compositional bias: polar residues. Acidic residues-rich tracts occupy residues 112 to 126 (GEQE…GEDE) and 203 to 214 (EESDEEEEDDEE). 2 positions are modified to phosphoserine: S205 and S233. Disordered stretches follow at residues 259-708 (FEER…NSNL), 721-784 (MSSS…PDED), 833-863 (QLYA…PFPG), and 942-1050 (AVPQ…VPPG). Positions 267–278 (KQGRYSSRRGGR) are enriched in basic residues. Positions 289 to 306 (GDQRRESTERGRMKDHRP) are enriched in basic and acidic residues. Positions 311–329 (TQPPVVPQAPPPPPPPPQQ) are enriched in pro residues. Low complexity-rich tracts occupy residues 335–348 (LFQP…LPVQ), 357–372 (QGMH…RMMM), and 394–403 (TVVTPVQVPL). Positions 419 to 433 (FPGPPEFPQHTPGPV) are enriched in pro residues. The residue at position 470 (R470) is an Asymmetric dimethylarginine. 3 stretches are compositionally biased toward pro residues: residues 481–490 (SPPPPPPPPT), 554–568 (FIPP…PGQP), and 582–630 (LHPP…PQHP). The span at 632–642 (QHQHHHHHHHL) shows a compositional bias: basic residues. Polar residues-rich tracts occupy residues 662–708 (QTAQ…NSNL) and 721–732 (MSSSRCSATPSA). Phosphoserine is present on residues S741 and S765. The stretch at 789 to 835 (LYRLKIEEQKRLREEILKQKELRRQQQAGARKKELLERLAQQQQQLY) forms a coiled coil. At S951 the chain carries Phosphoserine. K960 is covalently cross-linked (Glycyl lysine isopeptide (Lys-Gly) (interchain with G-Cter in SUMO2)). S973 and S991 each carry phosphoserine. R1028 carries the asymmetric dimethylarginine; alternate modification. R1028 is modified (omega-N-methylarginine; alternate). The 73-residue stretch at 1098–1170 (CVVSVEGLSS…SHINVALIVE (73 aa)) folds into the RRM domain.

In terms of assembly, associates with the NXF1-NXT1 RNA export complex. Interacts with ALKBH5; facilitating ALKBH5 recruitment to m6A-containing transcripts. Interacts with SENP1; promoting ALKBH5 deSUMOylation and subsequent activation.

The protein localises to the nucleus. Its subcellular location is the cytoplasm. Functionally, RNA reader protein, which recognizes and binds specific RNAs, thereby regulating RNA metabolic processes, such as mRNA export, mRNA stability and/or translation. Binds a subset of intronless RNAs containing GC-rich elements, such as NORAD, and promotes their nuclear export by recruiting target RNAs to components of the NXF1-NXT1 RNA export machinery. Specifically recognizes and binds N6-methyladenosine (m6A)-containing mRNAs, promoting their demethylation by ALKBH5. Acts as an molecular adapter, which (1) promotes ALKBH5 recruitment to m6A-containing transcripts and (2) activates ALKBH5 demethylase activity by recruiting SENP1, leading to ALKBH5 deSUMOylation and subsequent activation. The chain is RNA-binding protein 33 from Homo sapiens (Human).